Consider the following 414-residue polypeptide: TAR DNA-binding protein 43 (414 aa).

Residues K79, K84, K95, K102, and K181 each participate in a glycyl lysine isopeptide (Lys-Gly) (interchain with G-Cter in SUMO2) cross-link. RRM domains lie at 104-200 (SDLI…RCTE) and 191-262 (RKVF…NAEP). Phosphoserine is present on S183. The segment at 216 to 414 (DVMDVFIPKP…MDSKSSGWGM (199 aa)) is interaction with UBQLN2. A compositionally biased stretch (basic and acidic residues) spans 261–274 (EPKHNSNRQLERSG). Disordered regions lie at residues 261–303 (EPKH…GNNQ) and 341–373 (ASQQ…GNNS). K263 participates in a covalent cross-link: Glycyl lysine isopeptide (Lys-Gly) (interchain with G-Cter in SUMO2). A compositionally biased stretch (gly residues) spans 275-303 (RFGGNPGGFGNQGGFGNSRGGGAGLGNNQ). The residue at position 292 (S292) is a Phosphoserine. R293 carries the omega-N-methylarginine modification. Low complexity predominate over residues 342-358 (SQQNQSGPSGNNQNQGN).

Monomer and component of the SFPQ-NONO complex, which is probably a heterotetramer of two 52 kDa (NONO) and two 100 kDa (SFPQ) subunits. NONO is a component of spliceosome and U5.4/6 snRNP complexes. Interacts with CPNE4 (via VWFA domain). Forms heterodimers with PSPC1; this involves formation of a coiled coil domain by helices from both proteins. Part of complex consisting of SFPQ, NONO and MATR3. Part of a complex consisting of SFPQ, NONO and NR5A1. Part of a complex consisting of SFPQ, NONO and TOP1. Interacts with SPI1. Interacts with RNF43. Interacts with PER1 and PER2. Part of the HDP-RNP complex composed of at least HEXIM1, PRKDC, XRCC5, XRCC6, paraspeckle proteins (SFPQ, NONO, PSPC1, RBM14, and MATR3) and NEAT1 RNA. Interacts (via second RRM domain) with WASL; the interaction is direct. Component of a multiprotein complex with WASL and SFPQ. Interacts with ERCC6. Interacts (via DNA-binding domain) with TET1. Hyperphosphorylated. Post-translationally, ubiquitinated.

Its subcellular location is the nucleus. It is found in the nucleolus. The protein resides in the nucleus speckle. The protein localises to the chromosome. It localises to the mitochondrion. DNA- and RNA binding protein, involved in several nuclear processes. Binds the conventional octamer sequence in double-stranded DNA. Also binds single-stranded DNA and RNA at a site independent of the duplex site. Involved in pre-mRNA splicing, probably as a heterodimer with SFPQ. Interacts with U5 snRNA, probably by binding to a purine-rich sequence located on the 3' side of U5 snRNA stem 1b. Together with PSPC1, required for the formation of nuclear paraspeckles. The SFPQ-NONO heteromer associated with MATR3 may play a role in nuclear retention of defective RNAs. The SFPQ-NONO heteromer may be involved in DNA unwinding by modulating the function of topoisomerase I/TOP1. The SFPQ-NONO heteromer may be involved in DNA non-homologous end joining (NHEJ) required for double-strand break repair and V(D)J recombination and may stabilize paired DNA ends. In vitro, the complex strongly stimulates DNA end joining, binds directly to the DNA substrates and cooperates with the Ku70/G22P1-Ku80/XRCC5 (Ku) dimer to establish a functional preligation complex. NONO is involved in transcriptional regulation. The SFPQ-NONO-NR5A1 complex binds to the CYP17 promoter and regulates basal and cAMP-dependent transcriptional activity. NONO binds to an enhancer element in long terminal repeats of endogenous intracisternal A particles (IAPs) and activates transcription. Regulates the circadian clock by repressing the transcriptional activator activity of the CLOCK-BMAL1 heterodimer. Important for the functional organization of GABAergic synapses. Plays a specific and important role in the regulation of synaptic RNAs and GPHN/gephyrin scaffold structure, through the regulation of GABRA2 transcript. Plays a key role during neuronal differentiation by recruiting TET1 to genomic loci and thereby regulating 5-hydroxymethylcytosine levels. Plays a role in the regulation of DNA virus-mediated innate immune response by assembling into the HDP-RNP complex, a complex that serves as a platform for IRF3 phosphorylation and subsequent innate immune response activation through the cGAS-STING pathway. The chain is TAR DNA-binding protein 43 (TARDBP) from Pongo abelii (Sumatran orangutan).